A 193-amino-acid polypeptide reads, in one-letter code: Mediator of RNA polymerase II transcription subunit 11 (193 aa).

A coiled-coil region spans residues 31–68 (AREIMQDLGKEKQISKNKMDDNANSFKKLITQVENELS). The disordered stretch occupies residues 115–193 (IEPPTQEVDE…EEEEGEQMEN (79 aa)). Residues 121–143 (EVDEDNEDEEDSGDADMLEETPE) show a composition bias toward acidic residues. The segment covering 150 to 175 (TTSSSATTSDGGSGGADDAASSSAPR) has biased composition (low complexity). Residues 184–193 (EEEEGEQMEN) are compositionally biased toward acidic residues.

The protein belongs to the Mediator complex subunit 11 family. Component of the Mediator complex.

It localises to the nucleus. Functionally, component of the Mediator complex, a coactivator involved in the regulated transcription of nearly all RNA polymerase II-dependent genes. Mediator functions as a bridge to convey information from gene-specific regulatory proteins to the basal RNA polymerase II transcription machinery. Mediator is recruited to promoters by direct interactions with regulatory proteins and serves as a scaffold for the assembly of a functional pre-initiation complex with RNA polymerase II and the general transcription factors. In Caenorhabditis briggsae, this protein is Mediator of RNA polymerase II transcription subunit 11 (mdt-11).